A 507-amino-acid chain; its full sequence is Serine hydroxymethyltransferase (507 aa).

Position 283 is an N6-(pyridoxal phosphate)lysine (lysine 283).

This sequence belongs to the SHMT family. In terms of assembly, homotetramer. The cofactor is pyridoxal 5'-phosphate.

The enzyme catalyses (6R)-5,10-methylene-5,6,7,8-tetrahydrofolate + glycine + H2O = (6S)-5,6,7,8-tetrahydrofolate + L-serine. The protein operates within one-carbon metabolism; tetrahydrofolate interconversion. Functionally, interconversion of serine and glycine. This chain is Serine hydroxymethyltransferase (mel-32), found in Caenorhabditis elegans.